A 248-amino-acid chain; its full sequence is 5'-nucleotidase SurE (248 aa).

A divalent metal cation-binding residues include D8, D9, S39, and N91.

The protein belongs to the SurE nucleotidase family. It depends on a divalent metal cation as a cofactor.

The protein localises to the cytoplasm. It carries out the reaction a ribonucleoside 5'-phosphate + H2O = a ribonucleoside + phosphate. Nucleotidase that shows phosphatase activity on nucleoside 5'-monophosphates. In Geobacter sp. (strain M21), this protein is 5'-nucleotidase SurE.